A 631-amino-acid polypeptide reads, in one-letter code: 1-deoxy-D-xylulose-5-phosphate synthase (631 aa).

Thiamine diphosphate contacts are provided by residues His-74 and 115–117; that span reads GHS. Residue Asp-146 participates in Mg(2+) binding. Thiamine diphosphate-binding positions include 147–148, Asn-175, Tyr-286, and Glu-368; that span reads GA. Asn-175 contributes to the Mg(2+) binding site.

The protein belongs to the transketolase family. DXPS subfamily. Homodimer. Mg(2+) is required as a cofactor. It depends on thiamine diphosphate as a cofactor.

It catalyses the reaction D-glyceraldehyde 3-phosphate + pyruvate + H(+) = 1-deoxy-D-xylulose 5-phosphate + CO2. Its pathway is metabolic intermediate biosynthesis; 1-deoxy-D-xylulose 5-phosphate biosynthesis; 1-deoxy-D-xylulose 5-phosphate from D-glyceraldehyde 3-phosphate and pyruvate: step 1/1. Its function is as follows. Catalyzes the acyloin condensation reaction between C atoms 2 and 3 of pyruvate and glyceraldehyde 3-phosphate to yield 1-deoxy-D-xylulose-5-phosphate (DXP). In Natranaerobius thermophilus (strain ATCC BAA-1301 / DSM 18059 / JW/NM-WN-LF), this protein is 1-deoxy-D-xylulose-5-phosphate synthase.